We begin with the raw amino-acid sequence, 560 residues long: Dihydroxy-acid dehydratase (560 aa).

The interval 1 to 20 (MGDNLKKRSSMTTDGDNRAP) is disordered. Cys-52 is a binding site for [2Fe-2S] cluster. Asp-84 is a binding site for Mg(2+). Cys-125 is a [2Fe-2S] cluster binding site. Asp-126 and Lys-127 together coordinate Mg(2+). At Lys-127 the chain carries N6-carboxylysine. Cys-197 serves as a coordination point for [2Fe-2S] cluster. Residue Glu-448 coordinates Mg(2+). Ser-474 functions as the Proton acceptor in the catalytic mechanism.

This sequence belongs to the IlvD/Edd family. Homodimer. [2Fe-2S] cluster serves as cofactor. Requires Mg(2+) as cofactor.

It catalyses the reaction (2R)-2,3-dihydroxy-3-methylbutanoate = 3-methyl-2-oxobutanoate + H2O. The enzyme catalyses (2R,3R)-2,3-dihydroxy-3-methylpentanoate = (S)-3-methyl-2-oxopentanoate + H2O. It participates in amino-acid biosynthesis; L-isoleucine biosynthesis; L-isoleucine from 2-oxobutanoate: step 3/4. The protein operates within amino-acid biosynthesis; L-valine biosynthesis; L-valine from pyruvate: step 3/4. Functions in the biosynthesis of branched-chain amino acids. Catalyzes the dehydration of (2R,3R)-2,3-dihydroxy-3-methylpentanoate (2,3-dihydroxy-3-methylvalerate) into 2-oxo-3-methylpentanoate (2-oxo-3-methylvalerate) and of (2R)-2,3-dihydroxy-3-methylbutanoate (2,3-dihydroxyisovalerate) into 2-oxo-3-methylbutanoate (2-oxoisovalerate), the penultimate precursor to L-isoleucine and L-valine, respectively. The sequence is that of Dihydroxy-acid dehydratase from Leptospira interrogans serogroup Icterohaemorrhagiae serovar Lai (strain 56601).